Consider the following 749-residue polypeptide: 5-methyltetrahydropteroyltriglutamate--homocysteine methyltransferase (749 aa).

5-methyltetrahydropteroyltri-L-glutamate contacts are provided by residues R15–K18 and K114. L-homocysteine-binding positions include I425–S427 and E478. Residues I425–S427 and E478 contribute to the L-methionine site. A 5-methyltetrahydropteroyltri-L-glutamate-binding site is contributed by W555. D593 is a binding site for L-homocysteine. D593 contributes to the L-methionine binding site. E599 serves as a coordination point for 5-methyltetrahydropteroyltri-L-glutamate. Zn(2+) is bound by residues H636, C638, and E660. Residue H689 is the Proton donor of the active site. C721 lines the Zn(2+) pocket.

Belongs to the vitamin-B12 independent methionine synthase family. Zn(2+) is required as a cofactor.

It carries out the reaction 5-methyltetrahydropteroyltri-L-glutamate + L-homocysteine = tetrahydropteroyltri-L-glutamate + L-methionine. It functions in the pathway amino-acid biosynthesis; L-methionine biosynthesis via de novo pathway; L-methionine from L-homocysteine (MetE route): step 1/1. In terms of biological role, catalyzes the transfer of a methyl group from 5-methyltetrahydrofolate to homocysteine resulting in methionine formation. The chain is 5-methyltetrahydropteroyltriglutamate--homocysteine methyltransferase from Streptococcus thermophilus (strain ATCC BAA-491 / LMD-9).